We begin with the raw amino-acid sequence, 165 residues long: NADPH-dependent 7-cyano-7-deazaguanine reductase (165 aa).

Residue C56 is the Thioimide intermediate of the active site. The Proton donor role is filled by D63. Substrate contacts are provided by residues V78–S80 and H97–E98.

It belongs to the GTP cyclohydrolase I family. QueF type 1 subfamily.

The protein localises to the cytoplasm. It carries out the reaction 7-aminomethyl-7-carbaguanine + 2 NADP(+) = 7-cyano-7-deazaguanine + 2 NADPH + 3 H(+). It participates in tRNA modification; tRNA-queuosine biosynthesis. Its function is as follows. Catalyzes the NADPH-dependent reduction of 7-cyano-7-deazaguanine (preQ0) to 7-aminomethyl-7-deazaguanine (preQ1). In Bacillus cytotoxicus (strain DSM 22905 / CIP 110041 / 391-98 / NVH 391-98), this protein is NADPH-dependent 7-cyano-7-deazaguanine reductase.